We begin with the raw amino-acid sequence, 104 residues long: MGQPAKVLQLFKTLHRTRQQVFKNDKRALEAARVKINEEFKKHKNETSPEKIKEMMKLGSDVELLLRTAVIQGIHTDHDTLQLVPRKDLLTENVPYCDAPTQKQ.

A Phosphoserine modification is found at Ser-60.

It belongs to the complex I LYR family. In terms of assembly, interacts with UQCRFS1.

It localises to the mitochondrion matrix. In terms of biological role, assembly factor required for Rieske Fe-S protein UQCRFS1 incorporation into the cytochrome b-c1 (CIII) complex. Functions as a chaperone, binding to this subunit within the mitochondrial matrix and stabilizing it prior to its translocation and insertion into the late CIII dimeric intermediate within the mitochondrial inner membrane. The sequence is that of Complex III assembly factor LYRM7 (Lyrm7) from Mus musculus (Mouse).